A 317-amino-acid chain; its full sequence is Melanocyte-stimulating hormone receptor (317 aa).

The Extracellular segment spans residues 1-37 (MPVQGSQRRLLGSLNSTPTATPRLGLAANQTGARCLE). N-linked (GlcNAc...) asparagine glycosylation is present at Asn-29. Residues 38–63 (VSIPDGLFLSLGLVSLVENVLVVVAI) form a helical membrane-spanning segment. Residues 64–72 (ARNRNLHSP) are Cytoplasmic-facing. The helical transmembrane segment at 73–93 (MYCFICCLALSDLLVSGSNML) threads the bilayer. Residues 94-118 (DTAVILLLEAGALAARAAVVQQLDN) are Extracellular-facing. A helical transmembrane segment spans residues 119 to 140 (VIDVITCSSMLSSLCFLGAIAV). Over 141–163 (DRYISIFYALRYHSIVTLRRARR) the chain is Cytoplasmic. The chain crosses the membrane as a helical span at residues 164 to 183 (VVAAIWVASILFSTLFIAYC). Residues 184–191 (DHAAVLLC) lie on the Extracellular side of the membrane. A helical transmembrane segment spans residues 192–211 (LVVFFLAMLVLMAVLYVHML). At 212–240 (ARACQHAQGIAQLHKRQRPAHQGVGLKGA) the chain is on the cytoplasmic side. A helical transmembrane segment spans residues 241–266 (ATLTILLGIFFLCWGPFFLHLTLIVL). The Extracellular portion of the chain corresponds to 267 to 279 (CPQHPTCSCIFKN). Residues 280-300 (FNLFLTLIICNAIIDPLIYAF) form a helical membrane-spanning segment. Over 301 to 317 (RSQELRRTLKKVLLCSW) the chain is Cytoplasmic. Cys-315 carries the S-palmitoyl cysteine lipid modification.

This sequence belongs to the G-protein coupled receptor 1 family. In terms of assembly, interacts with MGRN1, but does not undergo MGRN1-mediated ubiquitination; this interaction competes with GNAS-binding and thus inhibits agonist-induced cAMP production. Interacts with OPN3; the interaction results in a decrease in MC1R-mediated cAMP signaling and ultimately a decrease in melanin production in melanocytes.

The protein resides in the cell membrane. Functionally, receptor for MSH (alpha, beta and gamma) and ACTH. The activity of this receptor is mediated by G proteins which activate adenylate cyclase. Mediates melanogenesis, the production of eumelanin (black/brown) and phaeomelanin (red/yellow), via regulation of cAMP signaling in melanocytes. The polypeptide is Melanocyte-stimulating hormone receptor (MC1R) (Trachypithecus francoisi (Francois' leaf monkey)).